A 515-amino-acid polypeptide reads, in one-letter code: Maturase K (515 aa).

It belongs to the intron maturase 2 family. MatK subfamily.

The protein resides in the plastid. The protein localises to the chloroplast. Usually encoded in the trnK tRNA gene intron. Probably assists in splicing its own and other chloroplast group II introns. The polypeptide is Maturase K (Pinus banksiana (Jack pine)).